A 253-amino-acid chain; its full sequence is Ciliary microtubule associated protein 1B (253 aa).

The STPGR repeat unit spans residues proline 182–arginine 207.

Belongs to the CIMAP family.

It localises to the cell projection. The protein localises to the cilium. It is found in the flagellum. This is Ciliary microtubule associated protein 1B from Homo sapiens (Human).